We begin with the raw amino-acid sequence, 339 residues long: Trace amine-associated receptor 2 (339 aa).

Over 1–36 (MTSFEAQQETFDCSEYGNGSCPENERSLGVRAAMYS) the chain is Extracellular. N-linked (GlcNAc...) asparagine glycosylation is present at Asn-18. 2 disulfides stabilise this stretch: Cys-21–Cys-185 and Cys-104–Cys-189. A helical membrane pass occupies residues 37–57 (LMAGAIFITIFGNLVMIISIS). Over 58 to 67 (YFKQLHTPTN) the chain is Cytoplasmic. Residues 68–88 (LLILSMAVTDFLLGFTIMPYS) traverse the membrane as a helical segment. Residues 89-106 (MVRSVENCWYFGLTFCKI) are Extracellular-facing. The chain crosses the membrane as a helical span at residues 107 to 127 (HYSFDLMLSITSIFHLCSVAI). Residues 128–150 (DRFYAICHPLHYCTKMTIPVVKR) lie on the Cytoplasmic side of the membrane. Residues 151–171 (LLLVCWSVPGAFAFGVVFSEA) traverse the membrane as a helical segment. Topologically, residues 172–195 (YADGIEGYDILVACSSSCPVMFNK) are extracellular. Residues 196 to 216 (LWGTTLFVAGFFTPSSMMVGI) traverse the membrane as a helical segment. At 217–251 (YGKIFAVSKKHARVIDNLPENQNNQMRKDKKAAKT) the chain is on the cytoplasmic side. A helical transmembrane segment spans residues 252–272 (LGIVMGVFLLCWFPCFFTILL). The Extracellular portion of the chain corresponds to 273–287 (DPFLNFSTPAILFDA). N-linked (GlcNAc...) asparagine glycosylation occurs at Asn-277. Residues 288–310 (LTWFGYFNSTCNPLIYGFFYPWF) traverse the membrane as a helical segment. Residues 311 to 339 (RRALRYILLGKIFSSHFHNTNLFTQKETE) lie on the Cytoplasmic side of the membrane.

The protein belongs to the G-protein coupled receptor 1 family.

The protein resides in the cell membrane. Functionally, orphan olfactory receptor specific for trace amines. Trace amine compounds are enriched in animal body fluids and act on trace amine-associated receptors (TAARs) to elicit both intraspecific and interspecific innate behaviors. Ligand-binding causes a conformation change that triggers signaling via the G(s)-class of G-proteins which activate adenylate cyclase. May also be required to provide olfactory input into limbic brain areas to regulate emotional behaviors likely via modulation of the dopamine system. The polypeptide is Trace amine-associated receptor 2 (Taar2) (Rattus norvegicus (Rat)).